The sequence spans 158 residues: Leptin-B (158 aa).

The first 19 residues, 1–19, serve as a signal peptide directing secretion; it reads MYMPLALVYASFLTLPAST. Residues Cys-114 and Cys-158 are joined by a disulfide bond.

This sequence belongs to the leptin family. Highly expressed in the brain and eye. Expressed at low levels in muscle and skin.

It is found in the secreted. May function as part of a signaling pathway that acts to regulate the size of the body fat depot. The polypeptide is Leptin-B (Oryzias latipes (Japanese rice fish)).